Reading from the N-terminus, the 240-residue chain is Sulfite dehydrogenase subunit B (240 aa).

4Fe-4S ferredoxin-type domains follow at residues 4 to 34 (LALV…WAGP), 64 to 95 (TETV…KRPD), and 97 to 126 (GVVL…LDAQ). [4Fe-4S] cluster is bound by residues Cys-13, Cys-16, Cys-19, Cys-23, Cys-73, Cys-76, Cys-81, Cys-85, Cys-106, Cys-109, Cys-112, and Cys-116.

Forms a heterotrimeric membrane-bound complex composed of a catalytic heterodimer (SoeAB) and a membrane anchor protein (SoeC). [4Fe-4S] cluster serves as cofactor.

Its subcellular location is the cell inner membrane. Functionally, part of the SoeABC complex that catalyzes the oxidation of sulfite to sulfate. SoeB is probably the electron transfer subunit. The chain is Sulfite dehydrogenase subunit B from Allochromatium vinosum (strain ATCC 17899 / DSM 180 / NBRC 103801 / NCIMB 10441 / D) (Chromatium vinosum).